A 401-amino-acid polypeptide reads, in one-letter code: Acetate kinase (401 aa).

Mg(2+) is bound at residue N7. K14 serves as a coordination point for ATP. Substrate is bound at residue R91. Residue D148 is the Proton donor/acceptor of the active site. Residues 208 to 212 (HLGNG), 283 to 285 (DFR), and 331 to 335 (GVGEN) contribute to the ATP site. Residue E384 participates in Mg(2+) binding.

This sequence belongs to the acetokinase family. As to quaternary structure, homodimer. Requires Mg(2+) as cofactor. Mn(2+) serves as cofactor.

It is found in the cytoplasm. The catalysed reaction is acetate + ATP = acetyl phosphate + ADP. It functions in the pathway metabolic intermediate biosynthesis; acetyl-CoA biosynthesis; acetyl-CoA from acetate: step 1/2. Functionally, catalyzes the formation of acetyl phosphate from acetate and ATP. Can also catalyze the reverse reaction. The protein is Acetate kinase of Helicobacter hepaticus (strain ATCC 51449 / 3B1).